The chain runs to 237 residues: tRNA (guanine-N(7)-)-methyltransferase (237 aa).

S-adenosyl-L-methionine-binding residues include Glu-67, Glu-92, Asp-119, and Asp-141. Asp-141 is an active-site residue. Substrate is bound by residues Lys-145, Asp-177, and 214-217 (TRYE).

This sequence belongs to the class I-like SAM-binding methyltransferase superfamily. TrmB family.

The catalysed reaction is guanosine(46) in tRNA + S-adenosyl-L-methionine = N(7)-methylguanosine(46) in tRNA + S-adenosyl-L-homocysteine. It functions in the pathway tRNA modification; N(7)-methylguanine-tRNA biosynthesis. In terms of biological role, catalyzes the formation of N(7)-methylguanine at position 46 (m7G46) in tRNA. This chain is tRNA (guanine-N(7)-)-methyltransferase, found in Jannaschia sp. (strain CCS1).